Reading from the N-terminus, the 112-residue chain is HTH-type transcriptional regulator YodB (112 aa).

Positions 6 to 105 (CPKMESAFSL…WADQFCEPGD (100 aa)) constitute an HTH hxlR-type domain.

Negatively regulates yodC and azoR1 which may contribute to the degradation of aromatic compounds. Probably positively regulates the catechol-specific transcription of mhqNOP, mhqED, and mhqA. The protein is HTH-type transcriptional regulator YodB (yodB) of Bacillus subtilis (strain 168).